Here is a 361-residue protein sequence, read N- to C-terminus: Tegument protein UL51 homolog (361 aa).

C8 carries S-palmitoyl cysteine; by host lipidation. The segment at 251–299 (GDEEDEVTVMSPSPEPVQQQPPVEPVQQQPQGRGSHRRRYKESAPQETL) is disordered. Positions 266–281 (PVQQQPPVEPVQQQPQ) are enriched in low complexity.

Belongs to the herpesviridae UL51 family. As to quaternary structure, oligomerizes. Interacts with UL103; this interaction mediates UL103 incorporation to virions. Phosphorylated. Post-translationally, palmitoylation is necessary for Golgi localization.

The protein resides in the virion tegument. Its subcellular location is the host cytoplasm. It localises to the host Golgi apparatus. Its function is as follows. Plays several roles during the time course of infection, including egress of virus particles from the perinuclear space and secondary envelopment of cytoplasmic capsids that bud into specific trans-Golgi network (TGN)-derived membranes. In Homo sapiens (Human), this protein is Tegument protein UL51 homolog (UL71).